The chain runs to 1079 residues: Electrogenic sodium bicarbonate cotransporter 1 (1079 aa).

The tract at residues 1–62 is required for interaction with AHCYL1; the sequence is MEDEAVLDRG…EKREKERISE (62 aa). The Cytoplasmic segment spans residues 1-466; sequence MEDEAVLDRG…FASDFYDALN (466 aa). A Phosphotyrosine modification is found at Tyr-30. A compositionally biased stretch (basic residues) spans 39-52; the sequence is YRRRRRHKRKTGHK. The disordered stretch occupies residues 39-78; the sequence is YRRRRRHKRKTGHKEKREKERISENYSDKSDVENADESSS. The residue at position 49 (Thr-49) is a Phosphothreonine; by PKA. Residues 53-70 show a composition bias toward basic and acidic residues; the sequence is EKREKERISENYSDKSDV. Ser-61, Ser-65, Ser-68, Ser-223, Ser-232, Ser-233, and Ser-245 each carry phosphoserine. The interval 237–265 is disordered; sequence MFTSPDNGSPAMTHRNLTSSSLNDISDKP. A phosphothreonine mark is found at Thr-249 and Thr-254. The segment covering 251–260 has biased composition (polar residues); that stretch reads RNLTSSSLND. Phosphoserine is present on residues Ser-256, Ser-257, and Ser-262. The chain crosses the membrane as a helical span at residues 467–491; that stretch reads IQSLSAILFIYLATVTNAITFGGLL. Residues 492–501 are Extracellular-facing; sequence GDATDNMQGV. The helical transmembrane segment at 502–520 threads the bilayer; sequence LESFLGTAVSGAIFCLFAG. Gln-521 is a topological domain (cytoplasmic). A discontinuously helical membrane pass occupies residues 522–542; that stretch reads PLTILSSTGPVLVFERLLFNF. The Extracellular segment spans residues 543–550; sequence SKDHNFDY. The chain crosses the membrane as a helical span at residues 551–571; sequence LEFRLWIGLWSAFLCLILVAT. Topologically, residues 572 to 585 are cytoplasmic; sequence DASFLVQYFTRFTE. The helical transmembrane segment at 586-609 threads the bilayer; sequence EGFSSLISFIFIYDAFKKMIKLAD. Residues 610–692 are Extracellular-facing; sequence YYPINSDFKV…GNNCNFVPDV (83 aa). Residues 693–710 traverse the membrane as a helical segment; sequence TLMSFILFLGTYTSSMAL. Residues 711-725 are Cytoplasmic-facing; sequence KKFKTSRYFPTTARK. A helical membrane pass occupies residues 726 to 745; it reads LISDFAIILSILIFCVIDAL. Residues 746–779 are Extracellular-facing; that stretch reads VGVDTPKLIVPSEFKPTSPNRGWFVPPFGGNPWW. The interval 748–779 is interaction with CA4; the sequence is VDTPKLIVPSEFKPTSPNRGWFVPPFGGNPWW. A helical transmembrane segment spans residues 780–807; it reads VYLAAAIPALLVTILIFMDQQITAVIVN. Residues 808 to 819 lie on the Cytoplasmic side of the membrane; that stretch reads RKEHKLKKGAGY. A helical transmembrane segment spans residues 820-836; it reads HLDLFWVAILMVVCSFM. Residue Ala-837 is a topological domain, extracellular. The discontinuously helical transmembrane segment at 838–855 threads the bilayer; sequence LPWYVAATVISIAHIDSL. Residues 856–877 lie on the Cytoplasmic side of the membrane; that stretch reads KMETETSAPGEQPKFLGVREQR. A helical membrane pass occupies residues 878-894; it reads VTGTLVFILTGLSVFMA. At 895 to 901 the chain is on the extracellular side; that stretch reads PILKFIP. Residues 902–918 form a helical membrane-spanning segment; that stretch reads MPVLYGVFLYMGVASLN. Over 919–960 the chain is Cytoplasmic; sequence GVQFMDRLKLLLMPLKHQPDFIYLRHVPLRRVHLFTFLQVLC. An intramembrane region (discontinuously helical) is located at residues 961 to 986; the sequence is LALLWILKSTVAAIIFPVMILALVAV. Topologically, residues 987-1079 are cytoplasmic; that stretch reads RKGMDYLFSQ…STFLERHTSC (93 aa). Residues 1002 to 1004 form a CA2-binding region; it reads LDD. Residues 1012-1079 are disordered; it reads KKKEDEKKKK…STFLERHTSC (68 aa). Ser-1026 is modified (phosphoserine; by PKA). Ser-1029 carries the post-translational modification Phosphoserine. Residues 1030–1033 form a CA2-binding region; sequence DNDD. 2 positions are modified to phosphoserine: Ser-1034 and Ser-1044. The required for basolateral targeting stretch occupies residues 1057–1059; that stretch reads FLS. Positions 1062 to 1079 are enriched in basic and acidic residues; it reads KPSDREKSSTFLERHTSC. Ser-1069 is modified (phosphoserine).

The protein belongs to the anion exchanger (TC 2.A.31) family. As to quaternary structure, homodimer. Interacts with CA2/carbonic anhydrase 2 and CA4/carbonic anhydrase 4 which may regulate transporter activity. Isoform 1 but not isoform 2 interacts with AHCYL1 (via PEST domain when phosphorylated); the interaction increases SLC4A4 isoform 1 activity. Interacts with AHCYL2. Post-translationally, phosphorylation of Ser-1026 by PKA increases the binding of CA2 and changes the Na(+):HCO3(-) stoichiometry of the transporter from 3:1 to 2:1. Phosphorylated in presence of STK39 and dephosphorylated in presence of PP1 phosphatase; phosphorylation seems to inhibit SLC4A4 activity. N-glycosylated. May not be necessary for the transporter basic functions. As to expression, expressed in colonic mucosa, kidney cortex and to gastric mucosa.

Its subcellular location is the basolateral cell membrane. The protein localises to the cell membrane. It carries out the reaction 2 hydrogencarbonate(out) + Na(+)(out) = 2 hydrogencarbonate(in) + Na(+)(in). The catalysed reaction is 3 hydrogencarbonate(out) + Na(+)(out) = 3 hydrogencarbonate(in) + Na(+)(in). In terms of biological role, electrogenic sodium/bicarbonate cotransporter with a Na(+):HCO3(-) stoichiometry varying from 1:2 to 1:3. May regulate bicarbonate influx/efflux at the basolateral membrane of cells and regulate intracellular pH. The sequence is that of Electrogenic sodium bicarbonate cotransporter 1 (SLC4A4) from Oryctolagus cuniculus (Rabbit).